A 487-amino-acid chain; its full sequence is Serine/threonine-protein kinase 4 (487 aa).

M1 is modified (N-acetylmethionine). Phosphothreonine is present on T3. A Protein kinase domain is found at 30 to 281 (FDVLEKLGEG…ATQLLQHPFV (252 aa)). ATP-binding positions include 36-44 (LGEGSYGSV) and K59. The active-site Proton acceptor is D149. A Phosphothreonine; by autocatalysis modification is found at T183. Position 265 is a phosphoserine (S265). The stretch at 290–310 (LRDLINEAMDVKLKRQESQQR) forms a coiled coil. Residues 303 to 312 (KRQESQQREV) show a composition bias toward basic and acidic residues. The interval 303 to 332 (KRQESQQREVDQDDEENSEEDEMDSGTMVR) is disordered. Over residues 313 to 326 (DQDDEENSEEDEMD) the composition is skewed to acidic residues. S320 carries the post-translational modification Phosphoserine. A phosphothreonine mark is found at T340 and T367. Phosphothreonine; by PKB/AKT1 is present on T387. Phosphoserine occurs at positions 410 and 414. Y433 is modified (phosphotyrosine). The SARAH domain maps to 433–480 (YEFLKSWTVEDLQKRLLALDPMMEQEIEEIRQKYQSKRQPILDAIEAK).

It belongs to the protein kinase superfamily. STE Ser/Thr protein kinase family. STE20 subfamily. As to quaternary structure, homodimer; mediated via the coiled-coil region. Interacts with NORE1, which inhibits autoactivation. Interacts with and stabilizes SAV1. Interacts with RASSF1. Interacts with FOXO3. Interacts with RASSF2 (via SARAH domain). Interacts with AR, PKB/AKT1, TNNI3 and SIRT1. Interacts with DLG5 (via PDZ domain 3). Interacts with MARK3 and SCRIB in the presence of DLG5. It depends on Mg(2+) as a cofactor. In terms of processing, autophosphorylated on serine and threonine residues. Phosphorylation at Thr-387 by PKB/AKT1, leads to inhibition of its: kinase activity, nuclear translocation and autophosphorylation at Thr-183. It also diminishes its cleavage by caspases and its ability to phosphorylate FOXO3. Proteolytically cleaved by caspase-3 during apoptosis at Asp-326 and Asp-349 resulting in a 37 kDa or a 39 kDa subunit respectively. The 39 kDa subunit is further cleaved into the 37 kDa form. Proteolytic cleavage results in kinase activation and nuclear translocation of the truncated form (MST1/N). It is less likely that cleavage at Asp-349 is a prerequisite for activation as this site is not conserved in the murine ortholog.

Its subcellular location is the cytoplasm. It localises to the nucleus. The catalysed reaction is L-seryl-[protein] + ATP = O-phospho-L-seryl-[protein] + ADP + H(+). The enzyme catalyses L-threonyl-[protein] + ATP = O-phospho-L-threonyl-[protein] + ADP + H(+). Inhibited by the C-terminal non-catalytic region. Activated by caspase-cleavage. Full activation also requires homodimerization and autophosphorylation of Thr-183. Activated by RASSF1 which acts by preventing its dephosphorylation. Its function is as follows. Stress-activated, pro-apoptotic kinase which, following caspase-cleavage, enters the nucleus and induces chromatin condensation followed by internucleosomal DNA fragmentation. Key component of the Hippo signaling pathway which plays a pivotal role in organ size control and tumor suppression by restricting proliferation and promoting apoptosis. The core of this pathway is composed of a kinase cascade wherein STK3/MST2 and STK4/MST1, in complex with its regulatory protein SAV1, phosphorylates and activates LATS1/2 in complex with its regulatory protein MOB1, which in turn phosphorylates and inactivates YAP1 oncoprotein and WWTR1/TAZ. Phosphorylation of YAP1 by LATS2 inhibits its translocation into the nucleus to regulate cellular genes important for cell proliferation, cell death, and cell migration. STK3/MST2 and STK4/MST1 are required to repress proliferation of mature hepatocytes, to prevent activation of facultative adult liver stem cells (oval cells), and to inhibit tumor formation. Phosphorylates 'Ser-14' of histone H2B (H2BS14ph) during apoptosis. Phosphorylates FOXO3 upon oxidative stress, which results in its nuclear translocation and cell death initiation. Phosphorylates MOBKL1A, MOBKL1B and RASSF2. Phosphorylates TNNI3 (cardiac Tn-I) and alters its binding affinity to TNNC1 (cardiac Tn-C) and TNNT2 (cardiac Tn-T). Phosphorylates FOXO1 on 'Ser-212' and regulates its activation and stimulates transcription of PMAIP1 in a FOXO1-dependent manner. Phosphorylates SIRT1 and inhibits SIRT1-mediated p53/TP53 deacetylation, thereby promoting p53/TP53 dependent transcription and apoptosis upon DNA damage. Acts as an inhibitor of PKB/AKT1. Phosphorylates AR on 'Ser-650' and suppresses its activity by intersecting with PKB/AKT1 signaling and antagonizing formation of AR-chromatin complexes. This Papio anubis (Olive baboon) protein is Serine/threonine-protein kinase 4 (STK4).